A 481-amino-acid polypeptide reads, in one-letter code: ATP synthase subunit beta (481 aa).

160 to 167 (GGAGVGKT) contacts ATP.

It belongs to the ATPase alpha/beta chains family. F-type ATPases have 2 components, CF(1) - the catalytic core - and CF(0) - the membrane proton channel. CF(1) has five subunits: alpha(3), beta(3), gamma(1), delta(1), epsilon(1). CF(0) has three main subunits: a(1), b(2) and c(9-12). The alpha and beta chains form an alternating ring which encloses part of the gamma chain. CF(1) is attached to CF(0) by a central stalk formed by the gamma and epsilon chains, while a peripheral stalk is formed by the delta and b chains.

Its subcellular location is the cell inner membrane. The catalysed reaction is ATP + H2O + 4 H(+)(in) = ADP + phosphate + 5 H(+)(out). Its function is as follows. Produces ATP from ADP in the presence of a proton gradient across the membrane. The catalytic sites are hosted primarily by the beta subunits. This is ATP synthase subunit beta from Anaeromyxobacter sp. (strain Fw109-5).